We begin with the raw amino-acid sequence, 358 residues long: Uptake hydrogenase small subunit (358 aa).

The N-terminal stretch at 1 to 45 (MSDIETFYDVMRRQGITRRSFMKSVRSPQHVLGLGPSFVPKIGEA) is a signal peptide. [4Fe-4S] cluster contacts are provided by cysteine 62, cysteine 65, cysteine 160, cysteine 194, histidine 232, cysteine 235, cysteine 260, and cysteine 266. [3Fe-4S] cluster is bound by residues cysteine 275, cysteine 294, and cysteine 297.

It belongs to the [NiFe]/[NiFeSe] hydrogenase small subunit family. As to quaternary structure, heterodimer of a large and a small subunit. [4Fe-4S] cluster is required as a cofactor. [3Fe-4S] cluster serves as cofactor.

The protein localises to the cell membrane. It catalyses the reaction H2 + A = AH2. In terms of biological role, this enzyme recycles the H(2) produced by nitrogenase to increase the production of ATP and to protect nitrogenase against inhibition or damage by O(2) under carbon- or phosphate-limited conditions. The chain is Uptake hydrogenase small subunit (hupA) from Rhodobacter capsulatus (Rhodopseudomonas capsulata).